The sequence spans 158 residues: SsrA-binding protein (158 aa).

This sequence belongs to the SmpB family.

The protein resides in the cytoplasm. Functionally, required for rescue of stalled ribosomes mediated by trans-translation. Binds to transfer-messenger RNA (tmRNA), required for stable association of tmRNA with ribosomes. tmRNA and SmpB together mimic tRNA shape, replacing the anticodon stem-loop with SmpB. tmRNA is encoded by the ssrA gene; the 2 termini fold to resemble tRNA(Ala) and it encodes a 'tag peptide', a short internal open reading frame. During trans-translation Ala-aminoacylated tmRNA acts like a tRNA, entering the A-site of stalled ribosomes, displacing the stalled mRNA. The ribosome then switches to translate the ORF on the tmRNA; the nascent peptide is terminated with the 'tag peptide' encoded by the tmRNA and targeted for degradation. The ribosome is freed to recommence translation, which seems to be the essential function of trans-translation. In Saccharopolyspora erythraea (strain ATCC 11635 / DSM 40517 / JCM 4748 / NBRC 13426 / NCIMB 8594 / NRRL 2338), this protein is SsrA-binding protein.